The chain runs to 143 residues: Nucleoside diphosphate kinase (143 aa).

Positions 11, 59, 87, 93, 104, and 114 each coordinate ATP. Catalysis depends on H117, which acts as the Pros-phosphohistidine intermediate.

Belongs to the NDK family. Homotetramer. Mg(2+) serves as cofactor.

It is found in the cytoplasm. It catalyses the reaction a 2'-deoxyribonucleoside 5'-diphosphate + ATP = a 2'-deoxyribonucleoside 5'-triphosphate + ADP. It carries out the reaction a ribonucleoside 5'-diphosphate + ATP = a ribonucleoside 5'-triphosphate + ADP. In terms of biological role, major role in the synthesis of nucleoside triphosphates other than ATP. The ATP gamma phosphate is transferred to the NDP beta phosphate via a ping-pong mechanism, using a phosphorylated active-site intermediate. This chain is Nucleoside diphosphate kinase, found in Shewanella sp. (strain MR-4).